A 195-amino-acid polypeptide reads, in one-letter code: Small ribosomal subunit protein uS5 (195 aa).

In terms of domain architecture, S5 DRBM spans 22–85 (IVEKLVHINR…EEAKKSMIRV (64 aa)). Residues 164 to 195 (QVAAKRGKKVSDVIGRRADGASAAQPAADAEG) are disordered. The segment covering 172–182 (KVSDVIGRRAD) has biased composition (basic and acidic residues). The span at 183 to 195 (GASAAQPAADAEG) shows a compositional bias: low complexity.

This sequence belongs to the universal ribosomal protein uS5 family. In terms of assembly, part of the 30S ribosomal subunit. Contacts proteins S4 and S8.

Functionally, with S4 and S12 plays an important role in translational accuracy. In terms of biological role, located at the back of the 30S subunit body where it stabilizes the conformation of the head with respect to the body. The protein is Small ribosomal subunit protein uS5 of Phenylobacterium zucineum (strain HLK1).